A 415-amino-acid polypeptide reads, in one-letter code: MVKLLLVGFVVAGIILGTQANEYLDFNVTEIDRIEELEFGFSKYSSNLNPLMVGLTLIRGADSGAVCLDGTLPGYHLHRGHGSGANSWLIQLEGGGWCNNIRTCVYRKTTRRGSSNYMEKQLQFTGILSDKAQENPDFFNWNRVKLRYCDGASFSGDGQNQAAQLQFRGERIWRAAIDDLKANGMRYANQALLSGCSAGGLAAILRCDEFRNLFPGSTKVKCLSDAGLFLDTADVSGGRTIRNLYNGVVELQSVKNNLPRICTNHLDPTSCFFPQNLISQMKTPLFIVNAAYDTWQIQSSIAPTSADPSGFWHDCRLNHGKCTPAQLRFLQGFREQMLRVVKGFSMSRQNGLFINSCFAHCQTERQDTWFADDSPVIRKKAVAIAVGDWYFDRAEVKLVDCPYPCDKSCHNLVFR.

Residues 1 to 20 (MVKLLLVGFVVAGIILGTQA) form the signal peptide. A glycan (N-linked (GlcNAc...) asparagine) is linked at N27. Residues S197, D293, and H360 each act as charge relay system in the active site.

The protein belongs to the pectinacetylesterase family.

The protein resides in the secreted. The protein localises to the cell wall. Its function is as follows. Hydrolyzes acetyl esters in homogalacturonan regions of pectin. In type I primary cell wall, galacturonic acid residues of pectin can be acetylated at the O-2 and O-3 positions. Decreasing the degree of acetylation of pectin gels in vitro alters their physical properties. The protein is Pectin acetylesterase 12 of Arabidopsis thaliana (Mouse-ear cress).